The sequence spans 312 residues: UDP-N-acetylenolpyruvoylglucosamine reductase (312 aa).

The region spanning 24-206 (GIGGPADLFA…SADILKVRNE (183 aa)) is the FAD-binding PCMH-type domain. Arg-166 is a catalytic residue. Residue Ser-217 is the Proton donor of the active site. Glu-307 is an active-site residue.

This sequence belongs to the MurB family. FAD serves as cofactor.

Its subcellular location is the cytoplasm. The enzyme catalyses UDP-N-acetyl-alpha-D-muramate + NADP(+) = UDP-N-acetyl-3-O-(1-carboxyvinyl)-alpha-D-glucosamine + NADPH + H(+). Its pathway is cell wall biogenesis; peptidoglycan biosynthesis. Functionally, cell wall formation. This is UDP-N-acetylenolpyruvoylglucosamine reductase from Solibacter usitatus (strain Ellin6076).